A 208-amino-acid polypeptide reads, in one-letter code: Protein-L-isoaspartate O-methyltransferase (208 aa).

Ser59 is an active-site residue.

It belongs to the methyltransferase superfamily. L-isoaspartyl/D-aspartyl protein methyltransferase family.

It localises to the cytoplasm. It catalyses the reaction [protein]-L-isoaspartate + S-adenosyl-L-methionine = [protein]-L-isoaspartate alpha-methyl ester + S-adenosyl-L-homocysteine. Functionally, catalyzes the methyl esterification of L-isoaspartyl residues in peptides and proteins that result from spontaneous decomposition of normal L-aspartyl and L-asparaginyl residues. It plays a role in the repair and/or degradation of damaged proteins. The protein is Protein-L-isoaspartate O-methyltransferase of Aliivibrio salmonicida (strain LFI1238) (Vibrio salmonicida (strain LFI1238)).